The primary structure comprises 283 residues: Adenosyl-chloride synthase (283 aa).

Residues Asp-11, 70-72, and 128-131 contribute to the substrate site; these read YVY and TWYG. A chloride-binding site is contributed by Gly-131.

Belongs to the SAM hydrolase / SAM-dependent halogenase family. As to quaternary structure, homotrimer.

It carries out the reaction chloride + S-adenosyl-L-methionine = 5'-chloro-5'-deoxyadenosine + L-methionine. Functionally, involved in the biosynthesis of the proteosome inhibitor salinosporamide A (SalA). Catalyzes the halogenation of S-adenosyl-L-methionine (SAM) with chloride to generate 5'-chloro-5'-deoxyadenosine (5'-CIDA) and L-methionine. It can also use bromide and iodide, producing halogenated 5'-deoxyadenosine (5'-XDA) and L-methionine, however no halogenase activity is detected in the presence of fluoride. This chain is Adenosyl-chloride synthase, found in Salinispora tropica (strain ATCC BAA-916 / DSM 44818 / JCM 13857 / NBRC 105044 / CNB-440).